A 103-amino-acid polypeptide reads, in one-letter code: Large ribosomal subunit protein uL24 (103 aa).

The protein belongs to the universal ribosomal protein uL24 family. In terms of assembly, part of the 50S ribosomal subunit.

In terms of biological role, one of two assembly initiator proteins, it binds directly to the 5'-end of the 23S rRNA, where it nucleates assembly of the 50S subunit. Its function is as follows. One of the proteins that surrounds the polypeptide exit tunnel on the outside of the subunit. The chain is Large ribosomal subunit protein uL24 from Ruthia magnifica subsp. Calyptogena magnifica.